Reading from the N-terminus, the 413-residue chain is Alpha-1-antitrypsin-like protein CM55-MS (413 aa).

A signal peptide spans 1-24 (MPSSISWGLLLLAALSCLGPGSLA). Glutamine 25 is subject to Pyrrolidone carboxylic acid. Asparagine 65, asparagine 102, asparagine 165, and asparagine 266 each carry an N-linked (GlcNAc...) asparagine glycan. Positions 368 to 387 (GATVGGITFMSRPKEVIFDR) are RCL.

Belongs to the serpin family. In terms of tissue distribution, expressed in liver.

The protein localises to the secreted. Serine protease inhibitor. The polypeptide is Alpha-1-antitrypsin-like protein CM55-MS (Tamias sibiricus (Siberian chipmunk)).